The primary structure comprises 221 residues: Casparian strip membrane protein 2 (221 aa).

Residues 1 to 21 (MEKSEATTIEIGETSRESKGK) are disordered. At 1–41 (MEKSEATTIEIGETSRESKGKTPLLAEVEQTARTAGSYRRG) the chain is on the cytoplasmic side. A helical transmembrane segment spans residues 42–62 (VAIFDLILRVSAATSALAATI). The Extracellular segment spans residues 63–89 (TMGTTEQTLPFFTQFFQFQASYDDLPA). A helical transmembrane segment spans residues 90–110 (FTFFVIALSIVTGYLVLSVPF). Over 111–131 (SVVCIAQPLAAVPRLLLIVCD) the chain is Cytoplasmic. Residues 132-152 (TLTVTLATAAASSSAAIVYLA) traverse the membrane as a helical segment. Over 153 to 221 (HNGNADANWL…HYWDRRWCEI (69 aa)) the chain is Extracellular.

The protein belongs to the Casparian strip membrane proteins (CASP) family. In terms of assembly, homodimer and heterodimers.

The protein localises to the cell membrane. In terms of biological role, regulates membrane-cell wall junctions and localized cell wall deposition. Required for establishment of the Casparian strip membrane domain (CSD) and the subsequent formation of Casparian strips, a cell wall modification of the root endodermis that determines an apoplastic barrier between the intraorganismal apoplasm and the extraorganismal apoplasm and prevents lateral diffusion. This chain is Casparian strip membrane protein 2, found in Erythranthe guttata (Yellow monkey flower).